We begin with the raw amino-acid sequence, 569 residues long: Adenine deaminase (569 aa).

Belongs to the metallo-dependent hydrolases superfamily. Adenine deaminase family. Mn(2+) is required as a cofactor.

It carries out the reaction adenine + H2O + H(+) = hypoxanthine + NH4(+). The protein is Adenine deaminase of Desulfitobacterium hafniense (strain Y51).